A 354-amino-acid chain; its full sequence is tRNA N6-adenosine threonylcarbamoyltransferase (354 aa).

His-115 and His-119 together coordinate Fe cation. Substrate contacts are provided by residues 138-142 (LVSGG), Asp-171, Gly-184, and Asn-285. Asp-313 provides a ligand contact to Fe cation.

The protein belongs to the KAE1 / TsaD family. The cofactor is Fe(2+).

It localises to the cytoplasm. It carries out the reaction L-threonylcarbamoyladenylate + adenosine(37) in tRNA = N(6)-L-threonylcarbamoyladenosine(37) in tRNA + AMP + H(+). Required for the formation of a threonylcarbamoyl group on adenosine at position 37 (t(6)A37) in tRNAs that read codons beginning with adenine. Is involved in the transfer of the threonylcarbamoyl moiety of threonylcarbamoyl-AMP (TC-AMP) to the N6 group of A37, together with TsaE and TsaB. TsaD likely plays a direct catalytic role in this reaction. The protein is tRNA N6-adenosine threonylcarbamoyltransferase of Albidiferax ferrireducens (strain ATCC BAA-621 / DSM 15236 / T118) (Rhodoferax ferrireducens).